The following is a 243-amino-acid chain: MARKGPKRHLKRLAAPSSWYIERKAYKWAVRPRPGPHNMRTSIPLLYIVRDYLGYAKTAREARKILNEGKFLVDGKVRKDYKFPVGIMDVVSIPETGEHYRVLPNRIGKLVLHPISEEEANIKPLRIRNKRMVKGAKVQLNFHDGTNHLIPLTEKDNYFTSYTVLMKVPEREIMEVLPFEKGAYVFVTQGKNVARKGRIVEIKKFPMGWPDVVTIEDEEGELFDTLKEYAFVVGKDKPKISLP.

One can recognise an S4 RNA-binding domain in the interval 43 to 105; it reads IPLLYIVRDY…TGEHYRVLPN (63 aa).

Belongs to the eukaryotic ribosomal protein eS4 family.

The protein is Small ribosomal subunit protein eS4 (rps4e) of Pyrococcus horikoshii (strain ATCC 700860 / DSM 12428 / JCM 9974 / NBRC 100139 / OT-3).